The chain runs to 96 residues: Putative defensin-like protein 236 (96 aa).

A signal peptide spans 1–23 (MKNATSLIIYCFLMFLLMNNVKG). Disulfide bonds link C31/C93, C41/C70, C49/C83, and C68/C85.

This sequence belongs to the DEFL family.

The protein localises to the secreted. In Arabidopsis thaliana (Mouse-ear cress), this protein is Putative defensin-like protein 236 (SCRL20).